Consider the following 715-residue polypeptide: Solute carrier organic anion transporter family member 1C1 (715 aa).

At 1–43 (MDTSSKENAHLFHKNSAQPAGGPSFTVGYPSTEEARPCCGKLK) the chain is on the cytoplasmic side. The chain crosses the membrane as a helical span at residues 44-63 (VFLGALSFVYFAKALAEGYL). Over 64-82 (KSTVTQIERRFEIPSSLVG) the chain is Extracellular. A helical transmembrane segment spans residues 83–103 (IIDGSFEIGNLLVITFVSYFG). Residues 104 to 109 (AKLHRP) lie on the Cytoplasmic side of the membrane. A helical transmembrane segment spans residues 110-134 (KIIGAGCLVMGFGTMLIAVPQFFME). At 135-187 (KYSYEKYERYSPSSNVTPSISPCYLESSSPSPSSILGKSQNKISHECVGDSSS) the chain is on the extracellular side. A helical membrane pass occupies residues 188–216 (SMWVYVFLGNLLRGLGETPIQPLGIAYLD). The Cytoplasmic segment spans residues 217 to 235 (DFASEDNAAFYIGCVQTVA). The helical transmembrane segment at 236–256 (IIGPIFGFLLGSLCAKLYVDI) threads the bilayer. Over 257–274 (GFVNLDHITITPKDPQWV) the chain is Extracellular. Residues 275-299 (GAWWLGYLIAGFLSLLAAVPFWCLP) traverse the membrane as a helical segment. Residues 300–351 (KTLPRSQSRENSGSTSEKSKFIDDPIHYQMAPGDDKMKIMEMAKDFLPSLKT) are Cytoplasmic-facing. A helical transmembrane segment spans residues 352–373 (LFRNPVYILYLCASTVQFNSLF). The Extracellular segment spans residues 374-393 (GMVTYKPKYIEQQYGQSSSK). The helical transmembrane segment at 394-417 (ANFVIGLINIPAVALGIFSGGIVM) threads the bilayer. Residues 418–421 (KKFR) lie on the Cytoplasmic side of the membrane. A helical transmembrane segment spans residues 422-445 (LGICEATKLYLGSSVFGYLLFLSL). Residues 446–557 (FALGCENSSV…NGCSQMFLYF (112 aa)) lie on the Extracellular side of the membrane. A glycan (N-linked (GlcNAc...) asparagine) is linked at N452. One can recognise a Kazal-like domain in the interval 473–528 (RALFSDCNSRCKCSDSKWEPMCGDNGITYVSACLAGCQSSSRSGKNIIFSNCTCVG). 3 disulfide bridges follow: C479-C509, C485-C505, and C494-C526. N-linked (GlcNAc...) asparagine glycosylation is found at N523 and N536. Residues 558–580 (LVISVITSYTLSLGGIPGYILLL) form a helical membrane-spanning segment. Topologically, residues 581-589 (RCIQPQLKS) are cytoplasmic. Residues 590 to 615 (FALGIYTLAVRVLAGIPAPVYFGVLI) traverse the membrane as a helical segment. At 616-649 (DTSCLKWGFKKCGSRGSCRLYDSHAFRHIYLGLT) the chain is on the extracellular side. The chain crosses the membrane as a helical span at residues 650 to 667 (TLLGTVSVFLSMAVLFVL). Over 668–715 (KKKYVSKHSSLITTREKIGMSSSIKKETCAARDRGLQPKYWPGKETRL) the chain is Cytoplasmic.

It belongs to the organo anion transporter (TC 2.A.60) family. Widely expressed throughout the brain except in the cerebellum. Not detected in kidney, heart, lung, skeletal muscle, spleen, liver, nor testis. Highly expressed in cerebral microvessels throughout the brain and in the choroid plexus (at mRNA and protein level).

Its subcellular location is the cell membrane. The enzyme catalyses 3,3',5'-triiodo-L-thyronine(out) = 3,3',5'-triiodo-L-thyronine(in). The catalysed reaction is L-thyroxine(out) = L-thyroxine(in). It catalyses the reaction L-thyroxine sulfate(out) = L-thyroxine sulfate(in). It carries out the reaction 17beta-estradiol 17-O-(beta-D-glucuronate)(out) = 17beta-estradiol 17-O-(beta-D-glucuronate)(in). The enzyme catalyses 3,3',5-triiodo-L-thyronine(out) = 3,3',5-triiodo-L-thyronine(in). Mediates the Na(+)-independent high affinity transport of thyroid hormones at the plasma membrane of brain capillary endothelial cells. The transport activity of substrates L-thyroxine (T4) and 3,3',5'-triiodo-L-thyronine (reverse T3, rT3) is much greater than that of 3,3',5-triiodo-L-thyronine (T3). The prehormone, T4, is the major form in the circulating blood and is converted to the active form, T3, by the iodothyronine-deiodinase in peripheral organs. T3 plays an essential role in brain development via binding to specific nuclear receptors (thyroid hormone receptor). Also transports organic anions such as the conjugated steroid 17-beta-glucuronosyl estradiol (17beta-estradiol 17-O-(beta-D-glucuronate)). Transports T4 and estrone-3-sulfate in a pH-insensitive manner. May serve as a drug efflux system at the blood brain barrier. This chain is Solute carrier organic anion transporter family member 1C1 (Slco1c1), found in Mus musculus (Mouse).